The primary structure comprises 787 residues: Protein translocase subunit SecA (787 aa).

Residues Gln85, 103–107 (GEGKT), and Asp492 contribute to the ATP site.

The protein belongs to the SecA family. Monomer and homodimer. Part of the essential Sec protein translocation apparatus which comprises SecA, SecYEG and auxiliary proteins SecDF. Other proteins may also be involved.

The protein localises to the cell membrane. It localises to the cytoplasm. The enzyme catalyses ATP + H2O + cellular proteinSide 1 = ADP + phosphate + cellular proteinSide 2.. In terms of biological role, part of the Sec protein translocase complex. Interacts with the SecYEG preprotein conducting channel. Has a central role in coupling the hydrolysis of ATP to the transfer of proteins into and across the cell membrane, serving as an ATP-driven molecular motor driving the stepwise translocation of polypeptide chains across the membrane. In Lactiplantibacillus plantarum (strain ATCC BAA-793 / NCIMB 8826 / WCFS1) (Lactobacillus plantarum), this protein is Protein translocase subunit SecA.